The following is a 1220-amino-acid chain: DNA-directed RNA polymerase subunit beta' (1220 aa).

Residues Cys60, Cys62, Cys75, and Cys78 each contribute to the Zn(2+) site. 3 residues coordinate Mg(2+): Asp449, Asp451, and Asp453. Residues Cys818, Cys892, Cys899, and Cys902 each coordinate Zn(2+).

It belongs to the RNA polymerase beta' chain family. The RNAP catalytic core consists of 2 alpha, 1 beta, 1 beta' and 1 omega subunit. When a sigma factor is associated with the core the holoenzyme is formed, which can initiate transcription. Mg(2+) serves as cofactor. Zn(2+) is required as a cofactor.

It carries out the reaction RNA(n) + a ribonucleoside 5'-triphosphate = RNA(n+1) + diphosphate. DNA-dependent RNA polymerase catalyzes the transcription of DNA into RNA using the four ribonucleoside triphosphates as substrates. In Lacticaseibacillus paracasei (strain ATCC 334 / BCRC 17002 / CCUG 31169 / CIP 107868 / KCTC 3260 / NRRL B-441) (Lactobacillus paracasei), this protein is DNA-directed RNA polymerase subunit beta'.